The chain runs to 290 residues: MLNKAEQISEKSESAYVERFVNAGGVETRYLEAGKGQPVILIHGGGAGAESEGNWRNVIPILARHYRVIAMDMLGFGKTAKPDIEYTQDRRIRHLHDFIKAMNFDGKVSIVGNSMGGATGLGVSVLHSELVNALVLMGSAGLVVEIHEDLRPIINYDFTREGMVHLVKALTNDGFKIDDAMINSRYTYATDEATRKAYVATMQWIREQGGLFYDPEFIRKVPVPTLVVHGKDDKVVPVETAYKFLDLIDDSWGYIIPHCGHWAMIEHPEDFANATLSFLSRRADITRAAA.

Catalysis depends on residues S114, D233, and H261.

Belongs to the DmpD/TodF/XylF esterase family. As to quaternary structure, homodimer.

It catalyses the reaction (2E,4E)-6-(2-aminophenyl)-2-hydroxy-6-oxohexa-2,4-dienoate + H2O = (2E)-2-hydroxypenta-2,4-dienoate + anthranilate + H(+). It participates in xenobiotic degradation; carbazole degradation. Involved in the degradation of carbazole, a toxic N-heterocyclic aromatic compound containing dibenzopyrrole system. Catalyzes the hydrolytic cleavage of a carbon-carbon bond of 2-hydroxy-6-oxo-6-(2'-aminophenyl)hexa-2,4-dienoic acid (HOPDA) to yield anthranilate. CarC is specific for 2-hydroxy-6-oxo-6-phenylhexa-2,4-dienoic acid (6-phenyl-HODA), and has little activity toward 2-hydroxy-6-oxohepta-2,4-dienoic acid and 2-hydroxymuconic semialdehyde. The effect of the presence of an amino group or hydroxyl group at the 2'-position of phenyl moiety of 6-phenyl-HODA on the enzyme activity is found to be small. In Metapseudomonas resinovorans (Pseudomonas resinovorans), this protein is 2-hydroxy-6-oxo-6-(2'-aminophenyl)hexa-2,4-dienoic acid hydrolase (carC).